The chain runs to 729 residues: Phosphoribosylformylglycinamidine synthase subunit PurL (729 aa).

His54 is a catalytic residue. ATP is bound by residues Tyr57 and Lys96. Glu98 contacts Mg(2+). Substrate-binding positions include 99-102 and Arg121; that span reads SHNH. Catalysis depends on His100, which acts as the Proton acceptor. Position 122 (Asp122) interacts with Mg(2+). Gln245 provides a ligand contact to substrate. A Mg(2+)-binding site is contributed by Asp273. Residue 317 to 319 coordinates substrate; that stretch reads ETQ. The ATP site is built by Asp495 and Gly532. Asn533 lines the Mg(2+) pocket. Residue Ser535 coordinates substrate.

This sequence belongs to the FGAMS family. In terms of assembly, monomer. Part of the FGAM synthase complex composed of 1 PurL, 1 PurQ and 2 PurS subunits.

The protein localises to the cytoplasm. It carries out the reaction N(2)-formyl-N(1)-(5-phospho-beta-D-ribosyl)glycinamide + L-glutamine + ATP + H2O = 2-formamido-N(1)-(5-O-phospho-beta-D-ribosyl)acetamidine + L-glutamate + ADP + phosphate + H(+). Its pathway is purine metabolism; IMP biosynthesis via de novo pathway; 5-amino-1-(5-phospho-D-ribosyl)imidazole from N(2)-formyl-N(1)-(5-phospho-D-ribosyl)glycinamide: step 1/2. Part of the phosphoribosylformylglycinamidine synthase complex involved in the purines biosynthetic pathway. Catalyzes the ATP-dependent conversion of formylglycinamide ribonucleotide (FGAR) and glutamine to yield formylglycinamidine ribonucleotide (FGAM) and glutamate. The FGAM synthase complex is composed of three subunits. PurQ produces an ammonia molecule by converting glutamine to glutamate. PurL transfers the ammonia molecule to FGAR to form FGAM in an ATP-dependent manner. PurS interacts with PurQ and PurL and is thought to assist in the transfer of the ammonia molecule from PurQ to PurL. The chain is Phosphoribosylformylglycinamidine synthase subunit PurL from Staphylococcus epidermidis (strain ATCC 35984 / DSM 28319 / BCRC 17069 / CCUG 31568 / BM 3577 / RP62A).